The chain runs to 145 residues: Large ribosomal subunit protein uL14m (145 aa).

The transit peptide at 1–30 directs the protein to the mitochondrion; sequence MAALTGLWGSFAHVSRAFSQRCFSTSGSLS.

It belongs to the universal ribosomal protein uL14 family. In terms of assembly, component of the mitochondrial ribosome large subunit (39S) which comprises a 16S rRNA and about 50 distinct proteins. Interacts with MALSU1.

It localises to the mitochondrion. Functionally, may form part of 2 intersubunit bridges in the assembled ribosome. Upon binding to MALSU1, intersubunit bridge formation is blocked, preventing ribosome formation and repressing translation. The chain is Large ribosomal subunit protein uL14m (Mrpl14) from Mus musculus (Mouse).